Here is a 326-residue protein sequence, read N- to C-terminus: Isopenicillin N synthase (326 aa).

The isopenicillin N site is built by R84, Y88, and Y186. R84, Y88, Y186, H209, and D211 together coordinate N-[(5S)-5-amino-5-carboxypentanoyl]-L-cysteinyl-D-valine. The Fe2OG dioxygenase domain occupies 183–283 (LIRYPFLENY…RLSIPFFANL (101 aa)). The Fe(2+) site is built by H209, D211, and H265. A 2-oxoglutarate-binding site is contributed by R274. S276 is a binding site for isopenicillin N. S276 serves as a coordination point for N-[(5S)-5-amino-5-carboxypentanoyl]-L-cysteinyl-D-valine.

It belongs to the iron/ascorbate-dependent oxidoreductase family. It depends on Fe cation as a cofactor. L-ascorbate is required as a cofactor.

The catalysed reaction is N-[(5S)-5-amino-5-carboxypentanoyl]-L-cysteinyl-D-valine + O2 = isopenicillin N + 2 H2O. It functions in the pathway antibiotic biosynthesis; penicillin G biosynthesis; penicillin G from L-alpha-aminoadipate and L-cysteine and L-valine: step 2/3. Functionally, removes, in the presence of oxygen, 4 hydrogen atoms from delta-L-(alpha-aminoadipyl)-L-cysteinyl-D-valine (ACV) to form the azetidinone and thiazolidine rings of isopenicillin. In Flavobacterium sp. (strain SC 12,154), this protein is Isopenicillin N synthase (pcbC).